Consider the following 364-residue polypeptide: UDP-N-acetylglucosamine--N-acetylmuramyl-(pentapeptide) pyrophosphoryl-undecaprenol N-acetylglucosamine transferase (364 aa).

Residues 13 to 15 (TGG), Asn-125, Arg-165, Ser-192, and Gln-293 each bind UDP-N-acetyl-alpha-D-glucosamine.

Belongs to the glycosyltransferase 28 family. MurG subfamily.

It is found in the cell inner membrane. It catalyses the reaction di-trans,octa-cis-undecaprenyl diphospho-N-acetyl-alpha-D-muramoyl-L-alanyl-D-glutamyl-meso-2,6-diaminopimeloyl-D-alanyl-D-alanine + UDP-N-acetyl-alpha-D-glucosamine = di-trans,octa-cis-undecaprenyl diphospho-[N-acetyl-alpha-D-glucosaminyl-(1-&gt;4)]-N-acetyl-alpha-D-muramoyl-L-alanyl-D-glutamyl-meso-2,6-diaminopimeloyl-D-alanyl-D-alanine + UDP + H(+). Its pathway is cell wall biogenesis; peptidoglycan biosynthesis. Cell wall formation. Catalyzes the transfer of a GlcNAc subunit on undecaprenyl-pyrophosphoryl-MurNAc-pentapeptide (lipid intermediate I) to form undecaprenyl-pyrophosphoryl-MurNAc-(pentapeptide)GlcNAc (lipid intermediate II). The sequence is that of UDP-N-acetylglucosamine--N-acetylmuramyl-(pentapeptide) pyrophosphoryl-undecaprenol N-acetylglucosamine transferase from Cereibacter sphaeroides (strain ATCC 17025 / ATH 2.4.3) (Rhodobacter sphaeroides).